Reading from the N-terminus, the 227-residue chain is Ribosomal RNA large subunit methyltransferase E (227 aa).

Gly-78, Trp-80, Asp-103, Asp-119, and Asp-143 together coordinate S-adenosyl-L-methionine. Residue Lys-183 is the Proton acceptor of the active site.

Belongs to the class I-like SAM-binding methyltransferase superfamily. RNA methyltransferase RlmE family.

It is found in the cytoplasm. It catalyses the reaction uridine(2552) in 23S rRNA + S-adenosyl-L-methionine = 2'-O-methyluridine(2552) in 23S rRNA + S-adenosyl-L-homocysteine + H(+). In terms of biological role, specifically methylates the uridine in position 2552 of 23S rRNA at the 2'-O position of the ribose in the fully assembled 50S ribosomal subunit. This chain is Ribosomal RNA large subunit methyltransferase E, found in Rickettsia canadensis (strain McKiel).